A 121-amino-acid polypeptide reads, in one-letter code: Large ribosomal subunit protein uL14 (121 aa).

The protein belongs to the universal ribosomal protein uL14 family. Part of the 50S ribosomal subunit. Forms a cluster with proteins L3 and L19. In the 70S ribosome, L14 and L19 interact and together make contacts with the 16S rRNA in bridges B5 and B8.

Binds to 23S rRNA. Forms part of two intersubunit bridges in the 70S ribosome. This chain is Large ribosomal subunit protein uL14, found in Akkermansia muciniphila (strain ATCC BAA-835 / DSM 22959 / JCM 33894 / BCRC 81048 / CCUG 64013 / CIP 107961 / Muc).